A 1222-amino-acid chain; its full sequence is Deubiquitinating protein VCPIP1 (1222 aa).

A compositionally biased stretch (pro residues) spans 1–21; the sequence is MSQPPPPPPPLPPPPPPPEAP. Residues 1 to 36 are disordered; the sequence is MSQPPPPPPPLPPPPPPPEAPQTPSSLASAAASGGL. The segment covering 25–36 has biased composition (low complexity); that stretch reads SSLASAAASGGL. Positions 208-361 constitute an OTU domain; it reads LIPVHVDGDG…RNHYIPLVGI (154 aa). Residue aspartate 216 is part of the active site. Cysteine 219 (nucleophile) is an active-site residue. Residue histidine 354 is part of the active site. An N6-acetyllysine modification is found at lysine 408. Disordered stretches follow at residues 725-776, 989-1009, and 1024-1074; these read SVMQ…KEKK, EATT…LGSG, and AFQG…VFTA. Phosphoserine occurs at positions 747 and 757. Positions 755-771 are enriched in low complexity; the sequence is PSSAPATPTKAPYSPTT. Threonine 763 bears the Phosphothreonine mark. Phosphoserine occurs at positions 768, 994, and 998. Positions 1041–1050 are enriched in basic and acidic residues; that stretch reads LDPRARETSV. A compositionally biased stretch (polar residues) spans 1057 to 1074; the sequence is GTDFSNSSTKTEPSVFTA. Serine 1077 is subject to Phosphoserine. Disordered regions lie at residues 1113–1175 and 1188–1222; these read VSSI…TETT and ATRS…MDHS. Over residues 1143-1157 the composition is skewed to polar residues; the sequence is VVSSSAKSGSLQTGL. The span at 1163–1175 shows a compositional bias: low complexity; sequence LTGGTENLNTETT. Serine 1198 carries the post-translational modification Phosphoserine. Positions 1200–1209 are enriched in acidic residues; that stretch reads EELEEMDSQD. Residue serine 1207 is modified to Phosphoserine; by ATM. Polar residues predominate over residues 1210–1222; sequence AEMTNTTEPMDHS.

As to quaternary structure, binds VCP and the ternary complex containing STX5A, NSFL1C and VCP. Phosphorylated at Ser-1207 by ATM or ATR following induction of covalent DNA-protein cross-links (DPCs).

Its subcellular location is the nucleus. It is found in the cytoplasm. The protein localises to the endoplasmic reticulum. It localises to the golgi apparatus. The protein resides in the golgi stack. The catalysed reaction is Thiol-dependent hydrolysis of ester, thioester, amide, peptide and isopeptide bonds formed by the C-terminal Gly of ubiquitin (a 76-residue protein attached to proteins as an intracellular targeting signal).. In terms of biological role, deubiquitinating enzyme involved in DNA repair and reassembly of the Golgi apparatus and the endoplasmic reticulum following mitosis. Necessary for VCP-mediated reassembly of Golgi stacks after mitosis. Plays a role in VCP-mediated formation of transitional endoplasmic reticulum (tER). Mediates dissociation of the ternary complex containing STX5A, NSFL1C and VCP. Also involved in DNA repair following phosphorylation by ATM or ATR: acts by catalyzing deubiquitination of SPRTN, thereby promoting SPRTN recruitment to chromatin and subsequent proteolytic cleavage of covalent DNA-protein cross-links (DPCs). Hydrolyzes 'Lys-11'- and 'Lys-48'-linked polyubiquitin chains. (Microbial infection) Regulates the duration of C.botulinum neurotoxin type A (BoNT/A) intoxication by catalyzing deubiquitination of Botulinum neurotoxin A light chain (LC), thereby preventing LC degradation by the proteasome, and accelerating botulinum neurotoxin intoxication in patients. The sequence is that of Deubiquitinating protein VCPIP1 from Homo sapiens (Human).